The following is a 189-amino-acid chain: Transcription factor FapR (189 aa).

It belongs to the FapR family.

Functionally, transcriptional factor involved in regulation of membrane lipid biosynthesis by repressing genes involved in fatty acid and phospholipid metabolism. The chain is Transcription factor FapR from Listeria monocytogenes serotype 4a (strain HCC23).